Consider the following 635-residue polypeptide: Threonine--tRNA ligase (635 aa).

The TGS domain occupies 1–61 (MISIRLKDGS…KEDGCLELLD (61 aa)). The tract at residues 242–532 (DHRRLGRELG…LTEHFGGAFP (291 aa)) is catalytic. Zn(2+) is bound by residues Cys-333, His-384, and His-509.

Belongs to the class-II aminoacyl-tRNA synthetase family. In terms of assembly, homodimer. Requires Zn(2+) as cofactor.

It localises to the cytoplasm. It catalyses the reaction tRNA(Thr) + L-threonine + ATP = L-threonyl-tRNA(Thr) + AMP + diphosphate + H(+). In terms of biological role, catalyzes the attachment of threonine to tRNA(Thr) in a two-step reaction: L-threonine is first activated by ATP to form Thr-AMP and then transferred to the acceptor end of tRNA(Thr). Also edits incorrectly charged L-seryl-tRNA(Thr). The chain is Threonine--tRNA ligase from Syntrophomonas wolfei subsp. wolfei (strain DSM 2245B / Goettingen).